The chain runs to 237 residues: Large ribosomal subunit protein uL1 (237 aa).

The protein belongs to the universal ribosomal protein uL1 family. In terms of assembly, part of the 50S ribosomal subunit.

Binds directly to 23S rRNA. The L1 stalk is quite mobile in the ribosome, and is involved in E site tRNA release. Its function is as follows. Protein L1 is also a translational repressor protein, it controls the translation of the L11 operon by binding to its mRNA. This Leptothrix cholodnii (strain ATCC 51168 / LMG 8142 / SP-6) (Leptothrix discophora (strain SP-6)) protein is Large ribosomal subunit protein uL1.